Reading from the N-terminus, the 494-residue chain is Glutamyl-tRNA(Gln) amidotransferase subunit A (494 aa).

Catalysis depends on charge relay system residues K78 and S158. S182 serves as the catalytic Acyl-ester intermediate.

It belongs to the amidase family. GatA subfamily. As to quaternary structure, heterotrimer of A, B and C subunits.

The enzyme catalyses L-glutamyl-tRNA(Gln) + L-glutamine + ATP + H2O = L-glutaminyl-tRNA(Gln) + L-glutamate + ADP + phosphate + H(+). Allows the formation of correctly charged Gln-tRNA(Gln) through the transamidation of misacylated Glu-tRNA(Gln) in organisms which lack glutaminyl-tRNA synthetase. The reaction takes place in the presence of glutamine and ATP through an activated gamma-phospho-Glu-tRNA(Gln). The protein is Glutamyl-tRNA(Gln) amidotransferase subunit A of Xanthobacter autotrophicus (strain ATCC BAA-1158 / Py2).